The sequence spans 609 residues: Aspartate--tRNA(Asp/Asn) ligase (609 aa).

E177 provides a ligand contact to L-aspartate. Positions Q201–K204 are aspartate. L-aspartate is bound at residue R223. Residues R223–E225 and Q232 contribute to the ATP site. L-aspartate is bound at residue H461. Residue E499 participates in ATP binding. R506 provides a ligand contact to L-aspartate. G551–R554 contacts ATP.

The protein belongs to the class-II aminoacyl-tRNA synthetase family. Type 1 subfamily. Homodimer.

The protein localises to the cytoplasm. The catalysed reaction is tRNA(Asx) + L-aspartate + ATP = L-aspartyl-tRNA(Asx) + AMP + diphosphate. In terms of biological role, aspartyl-tRNA synthetase with relaxed tRNA specificity since it is able to aspartylate not only its cognate tRNA(Asp) but also tRNA(Asn). Reaction proceeds in two steps: L-aspartate is first activated by ATP to form Asp-AMP and then transferred to the acceptor end of tRNA(Asp/Asn). This chain is Aspartate--tRNA(Asp/Asn) ligase, found in Synechococcus sp. (strain CC9605).